Here is a 284-residue protein sequence, read N- to C-terminus: Bifunctional protein FolD (284 aa).

NADP(+) contacts are provided by residues 166–168 (GAS) and Ile-232.

Belongs to the tetrahydrofolate dehydrogenase/cyclohydrolase family. As to quaternary structure, homodimer.

It catalyses the reaction (6R)-5,10-methylene-5,6,7,8-tetrahydrofolate + NADP(+) = (6R)-5,10-methenyltetrahydrofolate + NADPH. The enzyme catalyses (6R)-5,10-methenyltetrahydrofolate + H2O = (6R)-10-formyltetrahydrofolate + H(+). It functions in the pathway one-carbon metabolism; tetrahydrofolate interconversion. In terms of biological role, catalyzes the oxidation of 5,10-methylenetetrahydrofolate to 5,10-methenyltetrahydrofolate and then the hydrolysis of 5,10-methenyltetrahydrofolate to 10-formyltetrahydrofolate. The polypeptide is Bifunctional protein FolD (Pseudomonas aeruginosa (strain LESB58)).